The primary structure comprises 199 residues: Pyridoxine/pyridoxamine 5'-phosphate oxidase (199 aa).

FMN-binding positions include 44–49 (RTVLLK), 59–60 (YT), Lys-66, and Gln-91. Lys-49 is a binding site for substrate. Residues Tyr-109, Arg-113, and Ser-117 each coordinate substrate. Residues 126–127 (QS) and Trp-171 each bind FMN. A substrate-binding site is contributed by 177-179 (RLH). An FMN-binding site is contributed by Arg-181.

Belongs to the pyridoxamine 5'-phosphate oxidase family. As to quaternary structure, homodimer. Requires FMN as cofactor.

It catalyses the reaction pyridoxamine 5'-phosphate + O2 + H2O = pyridoxal 5'-phosphate + H2O2 + NH4(+). The catalysed reaction is pyridoxine 5'-phosphate + O2 = pyridoxal 5'-phosphate + H2O2. It functions in the pathway cofactor metabolism; pyridoxal 5'-phosphate salvage; pyridoxal 5'-phosphate from pyridoxamine 5'-phosphate: step 1/1. It participates in cofactor metabolism; pyridoxal 5'-phosphate salvage; pyridoxal 5'-phosphate from pyridoxine 5'-phosphate: step 1/1. Functionally, catalyzes the oxidation of either pyridoxine 5'-phosphate (PNP) or pyridoxamine 5'-phosphate (PMP) into pyridoxal 5'-phosphate (PLP). This chain is Pyridoxine/pyridoxamine 5'-phosphate oxidase, found in Xanthomonas euvesicatoria pv. vesicatoria (strain 85-10) (Xanthomonas campestris pv. vesicatoria).